A 177-amino-acid chain; its full sequence is Secretion monitor (177 aa).

The N-terminal stretch at 1 to 37 (MIGILNRWRQFGRRYFWPHLLLGMVAASLGVPLNLSG) is a signal peptide.

Belongs to the SecM family.

The protein localises to the cytoplasm. It is found in the cytosol. It localises to the periplasm. Its function is as follows. Regulates secA expression by translational coupling of the secM secA operon. Translational pausing at a specific Pro residue 5 residues before the end of the protein may allow disruption of a mRNA repressor helix that normally suppresses secA translation initiation. The polypeptide is Secretion monitor (Yersinia pestis bv. Antiqua (strain Antiqua)).